Consider the following 61-residue polypeptide: Large ribosomal subunit protein eL37 (61 aa).

The Zn(2+) site is built by Cys-20, Cys-23, Cys-35, and Cys-38. The segment at 20–38 (CRRCGRRAYHVRKKRCAAC) adopts a C4-type zinc-finger fold.

This sequence belongs to the eukaryotic ribosomal protein eL37 family. Requires Zn(2+) as cofactor.

In terms of biological role, binds to the 23S rRNA. The polypeptide is Large ribosomal subunit protein eL37 (rpl37e) (Methanocaldococcus jannaschii (strain ATCC 43067 / DSM 2661 / JAL-1 / JCM 10045 / NBRC 100440) (Methanococcus jannaschii)).